The sequence spans 145 residues: Transcription antitermination protein NusB (145 aa).

It belongs to the NusB family.

Involved in transcription antitermination. Required for transcription of ribosomal RNA (rRNA) genes. Binds specifically to the boxA antiterminator sequence of the ribosomal RNA (rrn) operons. This Aromatoleum aromaticum (strain DSM 19018 / LMG 30748 / EbN1) (Azoarcus sp. (strain EbN1)) protein is Transcription antitermination protein NusB.